Consider the following 1199-residue polypeptide: RNA-binding protein 20 (1199 aa).

Disordered stretches follow at residues 1 to 55 (MVLA…PQAS), 163 to 186 (PSTA…SLPS), and 320 to 346 (ERPP…PASQ). Over residues 25–42 (VMPGVQGPSVPQGQQGMQ) the composition is skewed to low complexity. The span at 43–52 (PLPPPPPPQP) shows a compositional bias: pro residues. Positions 170–183 (SPPSQTGGPGPSVS) are enriched in low complexity. The U1-type zinc-finger motif lies at 410-444 (HLPHICSICDKKVFDLKDWELHVKGKLHAQKCLLF). The RRM domain maps to 520–595 (RVVHICNLPE…EKLLIRMSTR (76 aa)). Positions 626–636 (EADRYGPERPR) are enriched in basic and acidic residues. Disordered stretches follow at residues 626-685 (EADR…NGED), 720-884 (REKY…YPTN), and 944-1077 (GETL…SQAC). An RS region spans residues 630–649 (YGPERPRSRSPMSRSLSPRS). Phosphoserine occurs at positions 637, 639, 642, 644, and 651. The segment covering 638–649 (RSPMSRSLSPRS) has biased composition (low complexity). Basic and acidic residues predominate over residues 667–685 (YAWRDEDRETVPRRENGED). Position 728 is a phosphoserine (S728). Composition is skewed to basic and acidic residues over residues 739-758 (KGRE…DKYP), 770-831 (RKEE…KESQ), and 859-868 (ENTRTKKGQD). A Phosphoserine modification is found at S787. A phosphoserine mark is found at S871, S873, and S955. Positions 962–971 (VPSTSASCPN) are enriched in polar residues. Phosphoserine occurs at positions 991, 1026, 1038, 1049, 1054, 1058, 1070, 1088, and 1093. Basic and acidic residues predominate over residues 1042-1055 (DDCKARGSPEDGSH). Residues 1067 to 1077 (PTESDLQSQAC) are compositionally biased toward polar residues. Residues 1133 to 1164 (FYCKLCGLFYTSEEAAKVSHCRSTVHYRNLQK) form a Matrin-type zinc finger. The tract at residues 1172–1199 (EGLKETEGTDSPSPERGGIGPHLERKKL) is disordered. Phosphoserine occurs at positions 1182 and 1184.

Associates with components of the U1 and U2 U1 small nuclear ribonucleoprotein complexes. Post-translationally, phosphorylation regulates the subcellular localization. Phosphorylation of Ser-637 and Ser-639 in the RS (arginine/serine-rich) region promotes nuclear localization of the protein. In contrast, phosphorylation of the C-terminal disordered region promotes localization to cytoplasmic ribonucleoprotein granules. As to expression, predominantly expressed in striated muscle, with highest expression in the heart. In differentiating myoblasts, expression correlates with sarcomere assembly: expression peaks when alpha-actinin is localized mainly in mature Z bodies within the nascent myofiber and expression declines as the sarcomeres continue to mature. Also expressed in kidney.

The protein localises to the nucleus. The protein resides in the cytoplasm. It localises to the cytoplasmic ribonucleoprotein granule. Its function is as follows. RNA-binding protein that acts as a regulator of mRNA splicing of a subset of genes encoding key structural proteins involved in cardiac development, such as TTN (Titin), CACNA1C, CAMK2D or PDLIM5/ENH. Acts as a repressor of mRNA splicing: specifically binds the 5'UCUU-3' motif that is predominantly found within intronic sequences of pre-mRNAs, leading to the exclusion of specific exons in target transcripts. RBM20-mediated exon skipping is hormone-dependent and is essential for TTN isoform transition in both cardiac and skeletal muscles. RBM20-mediated exon skipping of TTN provides substrates for the formation of circular RNA (circRNAs) from the TTN transcripts. Together with RBM24, promotes the expression of short isoforms of PDLIM5/ENH in cardiomyocytes. This is RNA-binding protein 20 from Mus musculus (Mouse).